The following is a 215-amino-acid chain: Large ribosomal subunit protein uL16 (215 aa).

The protein belongs to the universal ribosomal protein uL16 family. As to quaternary structure, component of the large ribosomal subunit.

It localises to the cytoplasm. Component of the large ribosomal subunit. Plays a role in the formation of actively translating ribosomes. Plays a role in the embryonic brain development. The protein is Large ribosomal subunit protein uL16 of Danio rerio (Zebrafish).